Reading from the N-terminus, the 209-residue chain is Kynurenine formamidase (209 aa).

W20 serves as a coordination point for substrate. Residues H50, H54, and D56 each contribute to the Zn(2+) site. H60 serves as the catalytic Proton donor/acceptor. 2 residues coordinate Zn(2+): H161 and E173.

It belongs to the Cyclase 1 superfamily. KynB family. In terms of assembly, homodimer. Zn(2+) is required as a cofactor.

It catalyses the reaction N-formyl-L-kynurenine + H2O = L-kynurenine + formate + H(+). It participates in amino-acid degradation; L-tryptophan degradation via kynurenine pathway; L-kynurenine from L-tryptophan: step 2/2. Functionally, catalyzes the hydrolysis of N-formyl-L-kynurenine to L-kynurenine, the second step in the kynurenine pathway of tryptophan degradation. In Bacillus thuringiensis subsp. konkukian (strain 97-27), this protein is Kynurenine formamidase.